The chain runs to 310 residues: GMP synthase [glutamine-hydrolyzing] subunit B (310 aa).

Residues 2–185 form the GMPS ATP-PPase domain; it reads FDPKKFIDEA…LGLPDSIVYR (184 aa). 29–35 serves as a coordination point for ATP; sequence SGGVDSS.

In terms of assembly, heterodimer composed of a glutamine amidotransferase subunit (A) and a GMP-binding subunit (B).

It carries out the reaction XMP + L-glutamine + ATP + H2O = GMP + L-glutamate + AMP + diphosphate + 2 H(+). It participates in purine metabolism; GMP biosynthesis; GMP from XMP (L-Gln route): step 1/1. Functionally, catalyzes the synthesis of GMP from XMP. This is GMP synthase [glutamine-hydrolyzing] subunit B (guaAB) from Methanocaldococcus jannaschii (strain ATCC 43067 / DSM 2661 / JAL-1 / JCM 10045 / NBRC 100440) (Methanococcus jannaschii).